We begin with the raw amino-acid sequence, 247 residues long: Ice-binding protein (247 aa).

Residues 1-19 (MTFSILSIFVFGLISSSVA) form the signal peptide. An N-linked (GlcNAc...) asparagine glycan is attached at Asn219.

The protein belongs to the ice-binding protein family.

Its subcellular location is the secreted. Functionally, binds ice crystals and most probably inhibits their growth in order to prevent cell damage from extracellular ice. In Flammulina populicola (Enokitake mushroom), this protein is Ice-binding protein.